A 189-amino-acid polypeptide reads, in one-letter code: Interferon alpha-A (189 aa).

An N-terminal signal peptide occupies residues 1–23 (MAPAWSFLLSLLLLSCNAICSLG). Intrachain disulfides connect Cys24-Cys122 and Cys52-Cys162.

It belongs to the alpha/beta interferon family.

The protein localises to the secreted. Its function is as follows. Produced by macrophages, IFN-alpha have antiviral activities. Interferon stimulates the production of two enzymes: a protein kinase and an oligoadenylate synthetase. This Bos taurus (Bovine) protein is Interferon alpha-A (IFNAA).